Here is a 156-residue protein sequence, read N- to C-terminus: S-ribosylhomocysteine lyase (156 aa).

Residues histidine 56, histidine 60, and cysteine 123 each contribute to the Fe cation site.

The protein belongs to the LuxS family. Homodimer. Fe cation is required as a cofactor.

The catalysed reaction is S-(5-deoxy-D-ribos-5-yl)-L-homocysteine = (S)-4,5-dihydroxypentane-2,3-dione + L-homocysteine. In terms of biological role, involved in the synthesis of autoinducer 2 (AI-2) which is secreted by bacteria and is used to communicate both the cell density and the metabolic potential of the environment. The regulation of gene expression in response to changes in cell density is called quorum sensing. Catalyzes the transformation of S-ribosylhomocysteine (RHC) to homocysteine (HC) and 4,5-dihydroxy-2,3-pentadione (DPD). This is S-ribosylhomocysteine lyase from Staphylococcus aureus (strain Mu3 / ATCC 700698).